The chain runs to 335 residues: NADH-quinone oxidoreductase subunit H (335 aa).

8 helical membrane-spanning segments follow: residues 12-32 (IIAV…GALL), 81-101 (VIFT…FAVI), 114-134 (IGLL…LFAG), 154-174 (VSYE…VGSF), 187-207 (LWFI…GVAV), 238-258 (FFVG…TLFF), 270-290 (SLAF…FILL), and 307-327 (WKFC…IVLL).

The protein belongs to the complex I subunit 1 family. In terms of assembly, NDH-1 is composed of 13 different subunits. Subunits NuoA, H, J, K, L, M, N constitute the membrane sector of the complex.

Its subcellular location is the cell inner membrane. It carries out the reaction a quinone + NADH + 5 H(+)(in) = a quinol + NAD(+) + 4 H(+)(out). In terms of biological role, NDH-1 shuttles electrons from NADH, via FMN and iron-sulfur (Fe-S) centers, to quinones in the respiratory chain. The immediate electron acceptor for the enzyme in this species is believed to be ubiquinone. Couples the redox reaction to proton translocation (for every two electrons transferred, four hydrogen ions are translocated across the cytoplasmic membrane), and thus conserves the redox energy in a proton gradient. This subunit may bind ubiquinone. This Pseudomonas syringae pv. tomato (strain ATCC BAA-871 / DC3000) protein is NADH-quinone oxidoreductase subunit H.